A 660-amino-acid chain; its full sequence is Squalene--hopene cyclase (660 aa).

The PFTB 1 repeat unit spans residues 73 to 114; the sequence is EAKIGNYLRRVQGAHGGWPLVHDGEFDMSASVKAYFALKMIG. D394 serves as the catalytic Proton donor. PFTB repeat units follow at residues 419–460 and 536–586; these read IDRG…GALL and IRKA…ALMA.

This sequence belongs to the terpene cyclase/mutase family.

The protein resides in the cell membrane. The catalysed reaction is squalene = hop-22(29)-ene. It carries out the reaction squalene + H2O = hopan-22-ol. The protein operates within secondary metabolite biosynthesis; hopanoid biosynthesis. In terms of biological role, catalyzes the cyclization of squalene into hopene. The chain is Squalene--hopene cyclase (shc) from Bradyrhizobium diazoefficiens (strain JCM 10833 / BCRC 13528 / IAM 13628 / NBRC 14792 / USDA 110).